A 325-amino-acid polypeptide reads, in one-letter code: TNFAIP3-interacting protein 3 (325 aa).

Disordered regions lie at residues Met1–Lys30 and Arg84–Glu129. Residues Ser17–Thr28 show a composition bias toward basic and acidic residues. Positions Ser27–Cys265 form a coiled coil. A ubiquitin-binding domain (UBD) region spans residues His190–Ala248.

In terms of assembly, interacts with TNFAIP3. Interacts with polyubiquitin. As to expression, highly expressed in lung, lymph node, thymus and fetal liver. Expressed at lower levels in bone marrow, brain, kidney, spleen, leukocytes and tonsils. Could be detected in heart, salivary gland, adrenal gland, pancreas, ovary and fetal brain. High levels detected in liver, colon, small intestine, muscle, stomach, testis, placenta, thyroid, uterus, prostate, skin and PBL.

Binds to zinc finger protein TNFAIP3 and inhibits NF-kappa-B activation induced by tumor necrosis factor, Toll-like receptor 4 (TLR4), interleukin-1 and 12-O-tetradecanoylphorbol-13-acetate. Overexpression inhibits NF-kappa-B-dependent gene expression in response to lipopolysaccharide at a level downstream of TRAF6 and upstream of IKBKB. NF-kappa-B inhibition is independent of TNFAIP3 binding. The chain is TNFAIP3-interacting protein 3 from Homo sapiens (Human).